Reading from the N-terminus, the 87-residue chain is Large ribosomal subunit protein eL34 (87 aa).

Belongs to the eukaryotic ribosomal protein eL34 family.

In Sulfurisphaera tokodaii (strain DSM 16993 / JCM 10545 / NBRC 100140 / 7) (Sulfolobus tokodaii), this protein is Large ribosomal subunit protein eL34.